The following is a 347-amino-acid chain: MSVMFDPDTAIYPFPPKPTPLSIDEKAYYREKIKRLLKERNAVMVAHYYTDPEIQQLAEETGGCISDSLEMARFGAKHPASTLLVAGVRFMGETAKILSPEKTILMPTLQAECSLDLGCPVEEFNAFCDAHPDRTVVVYANTSAAVKVRADWVVTSSIAVELIDHLDSLGEKIIWAPDKHLGRYVQKQTGGDILCWQGACIVHDEFKTQALTRLQEEYPDAAILVHPESPQAIVDMADAVGSTSQLIAAAKTLPHQRLIVATDRGIFYKMQQAVPDKELLEAPTAGEGATCRSCAHCPWMAMNGLQAIAEALEQEGSNHEVHVDERLRERALVPLNRMLDFAATLRG.

Residues H47 and S68 each contribute to the iminosuccinate site. C113 lines the [4Fe-4S] cluster pocket. Iminosuccinate is bound by residues 139-141 (YAN) and S156. C200 provides a ligand contact to [4Fe-4S] cluster. Residues 226-228 (HPE) and T243 each bind iminosuccinate. [4Fe-4S] cluster is bound at residue C297.

The protein belongs to the quinolinate synthase family. Type 1 subfamily. The cofactor is [4Fe-4S] cluster.

Its subcellular location is the cytoplasm. The enzyme catalyses iminosuccinate + dihydroxyacetone phosphate = quinolinate + phosphate + 2 H2O + H(+). It functions in the pathway cofactor biosynthesis; NAD(+) biosynthesis; quinolinate from iminoaspartate: step 1/1. Functionally, catalyzes the condensation of iminoaspartate with dihydroxyacetone phosphate to form quinolinate. The protein is Quinolinate synthase of Shigella boydii serotype 18 (strain CDC 3083-94 / BS512).